Consider the following 171-residue polypeptide: Protein ups1 homolog (171 aa).

The segment at 1 to 79 is required for mitochondrial targeting; the sequence is MTAICTDKTE…LNVNKSYILE (79 aa). The 170-residue stretch at 2 to 171 folds into the PRELI/MSF1 domain; sequence TAICTDKTEL…YVIQQKFQPS (170 aa).

Its subcellular location is the mitochondrion inner membrane. It localises to the mitochondrion intermembrane space. In terms of biological role, required for maintenance of normal mitochondrial morphology as well as PCP1-dependent processing of MGM1. The polypeptide is Protein ups1 homolog (Schizosaccharomyces pombe (strain 972 / ATCC 24843) (Fission yeast)).